Reading from the N-terminus, the 212-residue chain is Protein-L-isoaspartate O-methyltransferase (212 aa).

Ser56 is an active-site residue.

The protein belongs to the methyltransferase superfamily. L-isoaspartyl/D-aspartyl protein methyltransferase family.

It is found in the cytoplasm. The catalysed reaction is [protein]-L-isoaspartate + S-adenosyl-L-methionine = [protein]-L-isoaspartate alpha-methyl ester + S-adenosyl-L-homocysteine. In terms of biological role, catalyzes the methyl esterification of L-isoaspartyl residues in peptides and proteins that result from spontaneous decomposition of normal L-aspartyl and L-asparaginyl residues. It plays a role in the repair and/or degradation of damaged proteins. The polypeptide is Protein-L-isoaspartate O-methyltransferase (Myxococcus xanthus (strain DK1622)).